A 351-amino-acid chain; its full sequence is Probable RNA methyltransferase BAV1540 (351 aa).

E90 serves as the catalytic Proton acceptor. The Radical SAM core domain occupies 93–319 (LLPRDGLCVS…VKVRNSAGQD (227 aa)). C100 and C324 are oxidised to a cystine. The [4Fe-4S] cluster site is built by C107, C111, and C114. Residues 152 to 153 (GE), S182, 205 to 207 (SLH), and N281 each bind S-adenosyl-L-methionine. The active-site S-methylcysteine intermediate is the C324.

Belongs to the radical SAM superfamily. RlmN family. [4Fe-4S] cluster is required as a cofactor.

It localises to the cytoplasm. The sequence is that of Probable RNA methyltransferase BAV1540 from Bordetella avium (strain 197N).